A 102-amino-acid polypeptide reads, in one-letter code: Large ribosomal subunit protein uL24 (102 aa).

The protein belongs to the universal ribosomal protein uL24 family. As to quaternary structure, part of the 50S ribosomal subunit.

One of two assembly initiator proteins, it binds directly to the 5'-end of the 23S rRNA, where it nucleates assembly of the 50S subunit. Its function is as follows. One of the proteins that surrounds the polypeptide exit tunnel on the outside of the subunit. This is Large ribosomal subunit protein uL24 from Macrococcus caseolyticus (strain JCSC5402) (Macrococcoides caseolyticum).